We begin with the raw amino-acid sequence, 83 residues long: Apolipoprotein C-I, acidic form (83 aa).

The signal sequence occupies residues 1–26 (MRLFLSLPVLVVVLSMVLEGPAPAQG).

Belongs to the apolipoprotein C1 family.

The protein resides in the secreted. Its function is as follows. Inhibitor of lipoprotein binding to the low density lipoprotein (LDL) receptor, LDL receptor-related protein, and very low density lipoprotein (VLDL) receptor. Associates with high density lipoproteins (HDL) and the triacylglycerol-rich lipoproteins in the plasma and makes up about 10% of the protein of the VLDL and 2% of that of HDL. Appears to interfere directly with fatty acid uptake and is also the major plasma inhibitor of cholesteryl ester transfer protein (CETP). Binds free fatty acids and reduces their intracellular esterification. Modulates the interaction of APOE with beta-migrating VLDL and inhibits binding of beta-VLDL to the LDL receptor-related protein. The polypeptide is Apolipoprotein C-I, acidic form (APOC1A) (Pongo abelii (Sumatran orangutan)).